The sequence spans 367 residues: Nociceptin receptor (367 aa).

The Extracellular portion of the chain corresponds to 1–45 (MESLFPAPFWEVLYGSHFQGNLSLLNETVPHHLLLNASHSAFLPL). Asparagine 21, asparagine 26, and asparagine 36 each carry an N-linked (GlcNAc...) asparagine glycan. A helical membrane pass occupies residues 46-71 (GLKVTIVGLYLAVCIGGLLGNCLVMY). At 72–84 (VILRHTKMKTATN) the chain is on the cytoplasmic side. Residues 85-106 (IYIFNLALADTLVLLTLPFQGT) form a helical membrane-spanning segment. Topologically, residues 107-121 (DILLGFWPFGNALCK) are extracellular. A disulfide bridge connects residues cysteine 120 and cysteine 197. The chain crosses the membrane as a helical span at residues 122–143 (TVIAIDYYNMFTSTFTLTAMSV). Topologically, residues 144-162 (DRYVAICHPIRALDVRTSS) are cytoplasmic. A helical transmembrane segment spans residues 163–185 (KAQAVNVAIWALASVVGVPVAIM). Over 186 to 208 (GSAQVEDEEIECLVEIPAPQDYW) the chain is Extracellular. The helical transmembrane segment at 209–233 (GPVFAICIFLFSFIIPVLIISVCYS) threads the bilayer. At 234 to 261 (LMIRRLRGVRLLSGSREKDRNLRRITRL) the chain is on the cytoplasmic side. Residues 262–282 (VLVVVAVFVGCWTPVQVFVLV) form a helical membrane-spanning segment. Residues 283–297 (QGLGVQPGSETAVAI) lie on the Extracellular side of the membrane. The chain crosses the membrane as a helical span at residues 298–319 (LRFCTALGYVNSCLNPILYAFL). Residues 320–367 (DENFKACFRKFCCASALHREMQVSDRVRSIAKDVGLGCKTSETVPRPA) are Cytoplasmic-facing. Residue cysteine 331 is the site of S-palmitoyl cysteine attachment.

The protein belongs to the G-protein coupled receptor 1 family. Phosphorylation at Ser-360 requires GRK3. In terms of tissue distribution, in the brain, isoform KOR3 and isoform KOR3C are most abundant in hypothalamus and periaqueductal gray. Isoform KOR3A is highly expressed in cortex, striatum and brainstem. Isoform KOR3D is highly expressed in cerebellum, hypothalamus and brainstem. Detected in spleen lymphocytes.

It is found in the cell membrane. The protein localises to the cytoplasmic vesicle. Functionally, G-protein coupled opioid receptor that functions as a receptor for the endogenous neuropeptide nociceptin. Ligand binding causes a conformation change that triggers signaling via guanine nucleotide-binding proteins (G proteins) and modulates the activity of down-stream effectors. Signaling via G proteins mediates inhibition of adenylate cyclase activity and calcium channel activity. Arrestins modulate signaling via G proteins and mediate the activation of alternative signaling pathways that lead to the activation of MAP kinases. Plays a role in modulating nociception and the perception of pain. Plays a role in the regulation of locomotor activity by the neuropeptide nociceptin. In Mus musculus (Mouse), this protein is Nociceptin receptor (Oprl1).